A 213-amino-acid chain; its full sequence is ATP synthase peripheral stalk subunit OSCP, mitochondrial (213 aa).

The N-terminal 23 residues, 1–23 (MAAPATSVLSRQVRSFSTSVVRP), are a transit peptide targeting the mitochondrion. The SIFI-degron signature appears at 5–23 (ATSVLSRQVRSFSTSVVRP). An N6-acetyllysine mark is found at K60, K70, and K73. An N6-succinyllysine modification is found at K90. N6-acetyllysine; alternate occurs at positions 100 and 158. K100 and K158 each carry N6-succinyllysine; alternate. K176 and K192 each carry N6-acetyllysine. Residue K199 is modified to N6-succinyllysine.

It belongs to the ATPase delta chain family. As to quaternary structure, component of the ATP synthase complex composed at least of ATP5F1A/subunit alpha, ATP5F1B/subunit beta, ATP5MC1/subunit c (homooctomer), MT-ATP6/subunit a, MT-ATP8/subunit 8, ATP5ME/subunit e, ATP5MF/subunit f, ATP5MG/subunit g, ATP5MK/subunit k, ATP5MJ/subunit j, ATP5F1C/subunit gamma, ATP5F1D/subunit delta, ATP5F1E/subunit epsilon, ATP5PF/subunit F6, ATP5PB/subunit b, ATP5PD/subunit d, ATP5PO/subunit OSCP. ATP synthase complex consists of a soluble F(1) head domain (subunits alpha(3) and beta(3)) - the catalytic core - and a membrane F(0) domain - the membrane proton channel (subunits c, a, 8, e, f, g, k and j). These two domains are linked by a central stalk (subunits gamma, delta, and epsilon) rotating inside the F1 region and a stationary peripheral stalk (subunits F6, b, d, and OSCP). In terms of processing, in response to mitochondrial stress, the precursor protein is ubiquitinated by the SIFI complex in the cytoplasm before mitochondrial import, leading to its degradation. Within the SIFI complex, UBR4 initiates ubiquitin chain that are further elongated or branched by KCMF1. Expressed by the principal cells of the epididymis. Detected in flagella of epididymal sperm (at protein level).

The protein localises to the mitochondrion. Its subcellular location is the mitochondrion inner membrane. Functionally, subunit OSCP, of the mitochondrial membrane ATP synthase complex (F(1)F(0) ATP synthase or Complex V) that produces ATP from ADP in the presence of a proton gradient across the membrane which is generated by electron transport complexes of the respiratory chain. ATP synthase complex consist of a soluble F(1) head domain - the catalytic core - and a membrane F(1) domain - the membrane proton channel. These two domains are linked by a central stalk rotating inside the F(1) region and a stationary peripheral stalk. During catalysis, ATP synthesis in the catalytic domain of F(1) is coupled via a rotary mechanism of the central stalk subunits to proton translocation. In vivo, can only synthesize ATP although its ATP hydrolase activity can be activated artificially in vitro. Part of the complex F(0) domain. Part of the complex F(0) domain and the peripheric stalk, which acts as a stator to hold the catalytic alpha(3)beta(3) subcomplex and subunit a/ATP6 static relative to the rotary elements. The sequence is that of ATP synthase peripheral stalk subunit OSCP, mitochondrial from Rattus norvegicus (Rat).